The chain runs to 377 residues: Putative glutamate--cysteine ligase 2 (377 aa).

The protein belongs to the glutamate--cysteine ligase type 2 family. YbdK subfamily.

The catalysed reaction is L-cysteine + L-glutamate + ATP = gamma-L-glutamyl-L-cysteine + ADP + phosphate + H(+). Functionally, ATP-dependent carboxylate-amine ligase which exhibits weak glutamate--cysteine ligase activity. This chain is Putative glutamate--cysteine ligase 2, found in Chromobacterium violaceum (strain ATCC 12472 / DSM 30191 / JCM 1249 / CCUG 213 / NBRC 12614 / NCIMB 9131 / NCTC 9757 / MK).